Consider the following 106-residue polypeptide: Integration host factor subunit alpha (106 aa).

It belongs to the bacterial histone-like protein family. Heterodimer of an alpha and a beta chain.

In terms of biological role, this protein is one of the two subunits of integration host factor, a specific DNA-binding protein that functions in genetic recombination as well as in transcriptional and translational control. The chain is Integration host factor subunit alpha from Paramagnetospirillum magneticum (strain ATCC 700264 / AMB-1) (Magnetospirillum magneticum).